A 54-amino-acid chain; its full sequence is uncharacterized protein (54 aa).

Composition is skewed to basic and acidic residues over residues 1-19 and 26-54; these read MTEKKQQNKPNENPEHNDL and EELKENMNDEKHKRQQRDNSQSERDYDTK. A disordered region spans residues 1–54; the sequence is MTEKKQQNKPNENPEHNDLTDPIPNEELKENMNDEKHKRQQRDNSQSERDYDTK.

This is an uncharacterized protein from Bacillus subtilis (strain 168).